A 319-amino-acid polypeptide reads, in one-letter code: GTPase Era (319 aa).

Residues 9–196 (RSGVSLIIGR…MRTLRDLLPE (188 aa)) enclose the Era-type G domain. Residues 17–24 (GRPSSGKS) are G1. 17 to 24 (GRPSSGKS) is a binding site for GTP. The G2 stretch occupies residues 43–47 (QTTRN). The tract at residues 64-67 (DTPG) is G3. GTP-binding positions include 64–68 (DTPGY) and 127–130 (NKVD). The segment at 127 to 130 (NKVD) is G4. The tract at residues 175–177 (ISA) is G5. Residues 227 to 303 (CRDELPHALY…HISLDIRVKV (77 aa)) enclose the KH type-2 domain.

This sequence belongs to the TRAFAC class TrmE-Era-EngA-EngB-Septin-like GTPase superfamily. Era GTPase family. As to quaternary structure, monomer.

It localises to the cytoplasm. It is found in the cell inner membrane. In terms of biological role, an essential GTPase that binds both GDP and GTP, with rapid nucleotide exchange. Plays a role in 16S rRNA processing and 30S ribosomal subunit biogenesis and possibly also in cell cycle regulation and energy metabolism. The polypeptide is GTPase Era (Treponema pallidum (strain Nichols)).